The primary structure comprises 278 residues: Elongation factor Ts 1, mitochondrial (278 aa).

Belongs to the EF-Ts family.

The protein resides in the mitochondrion. Its function is as follows. Associates with the EF-Tu.GDP complex and induces the exchange of GDP to GTP. It remains bound to the aminoacyl-tRNA.EF-Tu.GTP complex up to the GTP hydrolysis stage on the ribosome. This is Elongation factor Ts 1, mitochondrial from Trypanosoma cruzi (strain CL Brener).